A 402-amino-acid chain; its full sequence is Zinc finger CCHC domain-containing protein 12 (402 aa).

Residues aspartate 268 to valine 277 show a composition bias toward acidic residues. Residues aspartate 268–arginine 342 are disordered. A compositionally biased stretch (polar residues) spans serine 311–serine 323. The CCHC-type zinc-finger motif lies at isoleucine 346 to asparagine 363. Residues histidine 383 to proline 392 are compositionally biased toward basic and acidic residues. Positions histidine 383–glutamine 402 are disordered.

It belongs to the ZCCHC12 family. Interacts with SMAD1 and CREB-binding protein (CBP). Forms a protein-DNA complex through its association with SMAD1.

Its function is as follows. Transcriptional coactivator in the bone morphogenetic protein (BMP)-signaling pathway. It positively modulates BMP signaling by interacting with SMAD1 and associating with CBP in the transcription complex. It contributes to the BMP-induced enhancement of cholinergic-neuron-specific gene expression. This is Zinc finger CCHC domain-containing protein 12 (ZCCHC12) from Bos taurus (Bovine).